A 609-amino-acid chain; its full sequence is Granule-bound starch synthase 1, chloroplastic/amyloplastic (609 aa).

The N-terminal 77 residues, 1–77 (MSALTTSQLA…SRRFPSVVVY (77 aa)), are a transit peptide targeting the chloroplast. The disordered stretch occupies residues 29 to 67 (RHGFQGLKPRSPAGGDATSLSVTTSARATPKQQRSVQRG). Residues 46–66 (TSLSVTTSARATPKQQRSVQR) show a composition bias toward polar residues. An ADP-alpha-D-glucose-binding site is contributed by Lys-97. Gly-100, Arg-408, Lys-413, Lys-462, and Gln-493 together coordinate ADP. Cys-337 and Cys-529 are oxidised to a cystine.

This sequence belongs to the glycosyltransferase 1 family. Bacterial/plant glycogen synthase subfamily.

The protein resides in the plastid. The protein localises to the chloroplast. Its subcellular location is the amyloplast. It carries out the reaction an NDP-alpha-D-glucose + [(1-&gt;4)-alpha-D-glucosyl](n) = [(1-&gt;4)-alpha-D-glucosyl](n+1) + a ribonucleoside 5'-diphosphate + H(+). Its pathway is glycan biosynthesis; starch biosynthesis. In terms of biological role, required for the synthesis of amylose in endosperm. This is Granule-bound starch synthase 1, chloroplastic/amyloplastic (WAXY) from Oryza sativa subsp. indica (Rice).